The primary structure comprises 1213 residues: DNA-directed RNA polymerase subunit beta' (1213 aa).

Zn(2+)-binding residues include Cys60, Cys62, Cys75, and Cys78. The Mg(2+) site is built by Asp450, Asp452, and Asp454. Residues Cys819, Cys893, Cys900, and Cys903 each coordinate Zn(2+).

This sequence belongs to the RNA polymerase beta' chain family. As to quaternary structure, the RNAP catalytic core consists of 2 alpha, 1 beta, 1 beta' and 1 omega subunit. When a sigma factor is associated with the core the holoenzyme is formed, which can initiate transcription. Mg(2+) serves as cofactor. Zn(2+) is required as a cofactor.

It carries out the reaction RNA(n) + a ribonucleoside 5'-triphosphate = RNA(n+1) + diphosphate. DNA-dependent RNA polymerase catalyzes the transcription of DNA into RNA using the four ribonucleoside triphosphates as substrates. The polypeptide is DNA-directed RNA polymerase subunit beta' (Streptococcus pyogenes serotype M6 (strain ATCC BAA-946 / MGAS10394)).